An 80-amino-acid polypeptide reads, in one-letter code: ATP synthase subunit c (80 aa).

Helical transmembrane passes span 11 to 31 and 53 to 73; these read IAAAMMMGLAAIGASIGIGIL and FFIVMGLVDAIPMIAVGLGLY.

It belongs to the ATPase C chain family. F-type ATPases have 2 components, F(1) - the catalytic core - and F(0) - the membrane proton channel. F(1) has five subunits: alpha(3), beta(3), gamma(1), delta(1), epsilon(1). F(0) has three main subunits: a(1), b(2) and c(10-14). The alpha and beta chains form an alternating ring which encloses part of the gamma chain. F(1) is attached to F(0) by a central stalk formed by the gamma and epsilon chains, while a peripheral stalk is formed by the delta and b chains.

The protein localises to the cell inner membrane. Functionally, f(1)F(0) ATP synthase produces ATP from ADP in the presence of a proton or sodium gradient. F-type ATPases consist of two structural domains, F(1) containing the extramembraneous catalytic core and F(0) containing the membrane proton channel, linked together by a central stalk and a peripheral stalk. During catalysis, ATP synthesis in the catalytic domain of F(1) is coupled via a rotary mechanism of the central stalk subunits to proton translocation. Its function is as follows. Key component of the F(0) channel; it plays a direct role in translocation across the membrane. A homomeric c-ring of between 10-14 subunits forms the central stalk rotor element with the F(1) delta and epsilon subunits. This chain is ATP synthase subunit c, found in Aeromonas hydrophila subsp. hydrophila (strain ATCC 7966 / DSM 30187 / BCRC 13018 / CCUG 14551 / JCM 1027 / KCTC 2358 / NCIMB 9240 / NCTC 8049).